Here is a 189-residue protein sequence, read N- to C-terminus: Interferon alpha-A (189 aa).

The N-terminal stretch at 1–23 (MAPAWSFLLSLLLLSCNAICSLG) is a signal peptide. Intrachain disulfides connect cysteine 24/cysteine 122 and cysteine 52/cysteine 162.

Belongs to the alpha/beta interferon family.

Its subcellular location is the secreted. Functionally, produced by macrophages, IFN-alpha have antiviral activities. Interferon stimulates the production of two enzymes: a protein kinase and an oligoadenylate synthetase. In Bos taurus (Bovine), this protein is Interferon alpha-A (IFNAA).